The primary structure comprises 79 residues: Conotoxin Leo-O1 (79 aa).

Residues 1-22 (MKLTCMMLVAVLFLTAWTFVTA) form the signal peptide. Positions 23 to 51 (NVSRNGLENLFPEERHEMMNPEAAKLNNR) are excised as a propeptide. 3 disulfides stabilise this stretch: cysteine 53–cysteine 70, cysteine 60–cysteine 74, and cysteine 69–cysteine 78.

The protein belongs to the conotoxin O1 superfamily. As to expression, expressed by the venom duct.

The protein localises to the secreted. In Conus leopardus (Leopard cone), this protein is Conotoxin Leo-O1.